A 790-amino-acid chain; its full sequence is N-methylputrescine oxidase 1, peroxisomal (790 aa).

The disordered stretch occupies residues 1–23; that stretch reads MATTKQKVTAPSPSPSSSTASCC. Over residues 9-23 the composition is skewed to low complexity; it reads TAPSPSPSSSTASCC. 423–434 is a substrate binding site; the sequence is AFDAGEDGLGKN. D425 functions as the Proton acceptor in the catalytic mechanism. C444 and C470 are joined by a disulfide. 506-511 contacts substrate; that stretch reads VANYEY. Catalysis depends on Y509, which acts as the Schiff-base intermediate with substrate; via topaquinone. Residue Y509 is modified to 2',4',5'-topaquinone. Positions 559 and 561 each coordinate Cu cation. Mn(2+) is bound by residues D714 and I715. Residue H725 participates in Cu cation binding.

This sequence belongs to the copper/topaquinone oxidase family. As to quaternary structure, homodimer. Cu cation serves as cofactor. The cofactor is Zn(2+). Requires L-topaquinone as cofactor. Post-translationally, topaquinone (TPQ) is generated by copper-dependent autoxidation of a specific tyrosyl residue. In terms of tissue distribution, mainly expressed in roots, and, to a lower extent, in stems.

It is found in the peroxisome. The enzyme catalyses a primary methyl amine + O2 + H2O = an aldehyde + H2O2 + NH4(+). The catalysed reaction is N-methylputrescine + O2 + H2O = 4-methylaminobutanal + H2O2 + NH4(+). The protein operates within alkaloid biosynthesis; nicotine biosynthesis. In terms of biological role, involved in the biosynthesis of pyridine alkaloid natural products, leading mainly to the production of anabasine, anatabine, nicotine and nornicotine, effective deterrents against herbivores with antiparasitic and pesticide properties (neurotoxins); nornicotine serves as the precursor in the synthesis of the carcinogen compound N'-nitrosonornicotine (NNN). Amine oxidase which mediates the deamination of N-methylputrescine to produce 4-methylaminobutanal. Oxidizes preferentially N-methylated amines. The polypeptide is N-methylputrescine oxidase 1, peroxisomal (Nicotiana tabacum (Common tobacco)).